Reading from the N-terminus, the 189-residue chain is Large ribosomal subunit protein uL6 (189 aa).

The protein belongs to the universal ribosomal protein uL6 family. Part of the 50S ribosomal subunit.

Its function is as follows. This protein binds to the 23S rRNA, and is important in its secondary structure. It is located near the subunit interface in the base of the L7/L12 stalk, and near the tRNA binding site of the peptidyltransferase center. In Phocaeicola vulgatus (strain ATCC 8482 / DSM 1447 / JCM 5826 / CCUG 4940 / NBRC 14291 / NCTC 11154) (Bacteroides vulgatus), this protein is Large ribosomal subunit protein uL6.